The following is a 353-amino-acid chain: Photosystem II protein D1 (353 aa).

The residue at position 2 (threonine 2) is an N-acetylthreonine. Phosphothreonine is present on threonine 2. 3 consecutive transmembrane segments (helical) span residues 29-46, 118-133, and 142-156; these read YIGW…TATS, HFFI…EWEL, and WIAV…AATA. Histidine 118 contacts chlorophyll a. Tyrosine 126 contacts pheophytin a. [CaMn4O5] cluster is bound by residues aspartate 170 and glutamate 189. A helical transmembrane segment spans residues 197 to 218; that stretch reads FHMLGVAGVFGGSLFSAMHGSL. Histidine 198 is a chlorophyll a binding site. Residues histidine 215 and 264–265 each bind a quinone; that span reads SF. Histidine 215 provides a ligand contact to Fe cation. Fe cation is bound at residue histidine 272. The chain crosses the membrane as a helical span at residues 274 to 288; sequence FLAIWPVMGIWFTAL. 4 residues coordinate [CaMn4O5] cluster: histidine 332, glutamate 333, aspartate 342, and alanine 344. The propeptide occupies 345 to 353; sequence SVEAPSINA.

Belongs to the reaction center PufL/M/PsbA/D family. PSII is composed of 1 copy each of membrane proteins PsbA, PsbB, PsbC, PsbD, PsbE, PsbF, PsbH, PsbI, PsbJ, PsbK, PsbL, PsbM, PsbT, PsbX, PsbY, PsbZ, Psb30/Ycf12, at least 3 peripheral proteins of the oxygen-evolving complex and a large number of cofactors. It forms dimeric complexes. It depends on The D1/D2 heterodimer binds P680, chlorophylls that are the primary electron donor of PSII, and subsequent electron acceptors. It shares a non-heme iron and each subunit binds pheophytin, quinone, additional chlorophylls, carotenoids and lipids. D1 provides most of the ligands for the Mn4-Ca-O5 cluster of the oxygen-evolving complex (OEC). There is also a Cl(-1) ion associated with D1 and D2, which is required for oxygen evolution. The PSII complex binds additional chlorophylls, carotenoids and specific lipids. as a cofactor. Post-translationally, tyr-161 forms a radical intermediate that is referred to as redox-active TyrZ, YZ or Y-Z. C-terminally processed by CTPA; processing is essential to allow assembly of the oxygen-evolving complex and thus photosynthetic growth.

The protein resides in the plastid. Its subcellular location is the chloroplast thylakoid membrane. It catalyses the reaction 2 a plastoquinone + 4 hnu + 2 H2O = 2 a plastoquinol + O2. In terms of biological role, photosystem II (PSII) is a light-driven water:plastoquinone oxidoreductase that uses light energy to abstract electrons from H(2)O, generating O(2) and a proton gradient subsequently used for ATP formation. It consists of a core antenna complex that captures photons, and an electron transfer chain that converts photonic excitation into a charge separation. The D1/D2 (PsbA/PsbD) reaction center heterodimer binds P680, the primary electron donor of PSII as well as several subsequent electron acceptors. This chain is Photosystem II protein D1, found in Ostreococcus tauri.